Here is a 249-residue protein sequence, read N- to C-terminus: MELKFMDHVGTASPEEIARFTAMAEAWWDPQGKFKPLHRFNPVRLAFMRRHFAAHFGRDESLMRPFEGLTLLDVGSGGGLLSEPLARMGFAVTGIDAGDKNVAVARLHAEQTGVPVDYRVSTPEQLDPNEAFDVVLSMEVVEHVPDVSAFLGHATARLKPGGVFMGATLNRTAKAWALAVVGAEYVLGWLPKGTHDWNKFVRPSEFAAMLRDRGITVRQMAGMAFNPLSDTWRETDNLDVNYMLFGVKG.

The S-adenosyl-L-methionine site is built by Arg44, Gly75, Asp96, and Met138.

It belongs to the methyltransferase superfamily. UbiG/COQ3 family.

It carries out the reaction a 3-demethylubiquinol + S-adenosyl-L-methionine = a ubiquinol + S-adenosyl-L-homocysteine + H(+). The catalysed reaction is a 3-(all-trans-polyprenyl)benzene-1,2-diol + S-adenosyl-L-methionine = a 2-methoxy-6-(all-trans-polyprenyl)phenol + S-adenosyl-L-homocysteine + H(+). It functions in the pathway cofactor biosynthesis; ubiquinone biosynthesis. O-methyltransferase that catalyzes the 2 O-methylation steps in the ubiquinone biosynthetic pathway. The chain is Ubiquinone biosynthesis O-methyltransferase from Paramagnetospirillum magneticum (strain ATCC 700264 / AMB-1) (Magnetospirillum magneticum).